The sequence spans 188 residues: dCTP deaminase (188 aa).

Residues 111–116 (KSTYAR), 135–137 (TLE), Gln-156, Tyr-170, and Gln-180 each bind dCTP. Glu-137 functions as the Proton donor/acceptor in the catalytic mechanism.

This sequence belongs to the dCTP deaminase family. Homotrimer.

The enzyme catalyses dCTP + H2O + H(+) = dUTP + NH4(+). It functions in the pathway pyrimidine metabolism; dUMP biosynthesis; dUMP from dCTP (dUTP route): step 1/2. Functionally, catalyzes the deamination of dCTP to dUTP. The protein is dCTP deaminase of Coxiella burnetii (strain CbuK_Q154) (Coxiella burnetii (strain Q154)).